A 516-amino-acid polypeptide reads, in one-letter code: Probable rhamnogalacturonase B (516 aa).

The N-terminal stretch at 1–21 (MRLHAFTLLSLLGLVPSFAAA) is a signal peptide. A disulfide bond links C42 and C68. The N-linked (GlcNAc...) asparagine glycan is linked to N145. D219 acts as the Proton donor in catalysis. The cysteines at positions 221 and 238 are disulfide-linked. The N-linked (GlcNAc...) asparagine glycan is linked to N239. The active site involves H294. N-linked (GlcNAc...) asparagine glycosylation is present at N321. Intrachain disulfides connect C344–C350 and C372–C381. Positions 462 to 516 (ETPAAASRSEQVVQGASQETSQPAPESAGPVRSVPTGGNRPSRHRHGHHHFWIAA) are disordered. The span at 469–485 (RSEQVVQGASQETSQPA) shows a compositional bias: polar residues. Basic residues predominate over residues 502 to 516 (PSRHRHGHHHFWIAA).

The protein belongs to the glycosyl hydrolase 28 family.

It is found in the secreted. It catalyses the reaction Endohydrolysis of alpha-D-GalA-(1-&gt;2)-alpha-L-Rha glycosidic bond in the rhamnogalacturonan I backbone with initial inversion of anomeric configuration releasing oligosaccharides with beta-D-GalA at the reducing end.. Functionally, pectinolytic enzymes consist of four classes of enzymes: pectine lyase, polygalacturonase, pectin methylesterase and rhamnogalacturonase. Hydrolyzes alpha-D-galacturonopyranosyl-(1,2)-alpha-L-rhamnopyranosyl linkages in the backbone of the hairy regions of pectins. The polypeptide is Probable rhamnogalacturonase B (rhgB) (Neosartorya fischeri (strain ATCC 1020 / DSM 3700 / CBS 544.65 / FGSC A1164 / JCM 1740 / NRRL 181 / WB 181) (Aspergillus fischerianus)).